A 199-amino-acid polypeptide reads, in one-letter code: MYFAEPVAKLIEHLAKLPGIGPKTAQKLALYLLEIPEEEARALAEAIITARKNTRYCSICFNLTDTDPCAICRNPGRNHRLLMVVEEAKDVAAMERTGSFNGIYHVLHGVLSPIKGIGPEDLKVRELLLRLSREPVEEIIIATNPTVEGEATAMYLASLLKPLNFKVTRIAHGLPVGSDIEYADELTIRKALEGRRVLE.

The segment at 57-72 adopts a C4-type zinc-finger fold; that stretch reads CSICFNLTDTDPCAIC. The 96-residue stretch at 80–175 folds into the Toprim domain; that stretch reads RLLMVVEEAK…KVTRIAHGLP (96 aa).

The protein belongs to the RecR family.

In terms of biological role, may play a role in DNA repair. It seems to be involved in an RecBC-independent recombinational process of DNA repair. It may act with RecF and RecO. The chain is Recombination protein RecR from Carboxydothermus hydrogenoformans (strain ATCC BAA-161 / DSM 6008 / Z-2901).